The chain runs to 497 residues: Probable cytosol aminopeptidase (497 aa).

The Mn(2+) site is built by lysine 263 and aspartate 268. The active site involves lysine 275. Aspartate 286, aspartate 345, and glutamate 347 together coordinate Mn(2+). The active site involves arginine 349.

The protein belongs to the peptidase M17 family. Requires Mn(2+) as cofactor.

The protein localises to the cytoplasm. The enzyme catalyses Release of an N-terminal amino acid, Xaa-|-Yaa-, in which Xaa is preferably Leu, but may be other amino acids including Pro although not Arg or Lys, and Yaa may be Pro. Amino acid amides and methyl esters are also readily hydrolyzed, but rates on arylamides are exceedingly low.. It carries out the reaction Release of an N-terminal amino acid, preferentially leucine, but not glutamic or aspartic acids.. Presumably involved in the processing and regular turnover of intracellular proteins. Catalyzes the removal of unsubstituted N-terminal amino acids from various peptides. In Methylorubrum populi (strain ATCC BAA-705 / NCIMB 13946 / BJ001) (Methylobacterium populi), this protein is Probable cytosol aminopeptidase.